A 103-amino-acid polypeptide reads, in one-letter code: Co-chaperonin GroES (103 aa).

A disordered region spans residues 31 to 67 (GGILLPDTAKEKPQVGEVAQVGPGKRNEDGSRQSPEV).

The protein belongs to the GroES chaperonin family. Heptamer of 7 subunits arranged in a ring. Interacts with the chaperonin GroEL.

The protein localises to the cytoplasm. Together with the chaperonin GroEL, plays an essential role in assisting protein folding. The GroEL-GroES system forms a nano-cage that allows encapsulation of the non-native substrate proteins and provides a physical environment optimized to promote and accelerate protein folding. GroES binds to the apical surface of the GroEL ring, thereby capping the opening of the GroEL channel. This chain is Co-chaperonin GroES, found in Prochlorococcus marinus (strain NATL2A).